We begin with the raw amino-acid sequence, 425 residues long: Serine--tRNA ligase (425 aa).

230–232 provides a ligand contact to L-serine; that stretch reads TAE. 261–263 serves as a coordination point for ATP; the sequence is RAE. Glu284 lines the L-serine pocket. Residue 348–351 coordinates ATP; sequence EISS. Ser384 contributes to the L-serine binding site.

It belongs to the class-II aminoacyl-tRNA synthetase family. Type-1 seryl-tRNA synthetase subfamily. As to quaternary structure, homodimer. The tRNA molecule binds across the dimer.

It localises to the cytoplasm. It carries out the reaction tRNA(Ser) + L-serine + ATP = L-seryl-tRNA(Ser) + AMP + diphosphate + H(+). It catalyses the reaction tRNA(Sec) + L-serine + ATP = L-seryl-tRNA(Sec) + AMP + diphosphate + H(+). It participates in aminoacyl-tRNA biosynthesis; selenocysteinyl-tRNA(Sec) biosynthesis; L-seryl-tRNA(Sec) from L-serine and tRNA(Sec): step 1/1. In terms of biological role, catalyzes the attachment of serine to tRNA(Ser). Is also able to aminoacylate tRNA(Sec) with serine, to form the misacylated tRNA L-seryl-tRNA(Sec), which will be further converted into selenocysteinyl-tRNA(Sec). The polypeptide is Serine--tRNA ligase (Desulforudis audaxviator (strain MP104C)).